The primary structure comprises 602 residues: MFS-type efflux transporter pyiT (602 aa).

Positions 1-33 are disordered; the sequence is MEKAKDSLPTTGDPVPSQGTINPVDETGGSASD. A run of 7 helical transmembrane segments spans residues 43 to 63, 123 to 143, 156 to 176, 185 to 205, 212 to 232, 251 to 271, and 282 to 302; these read FWFT…EGSV, WLTI…GGAT, GLGS…LLPL, IIFM…GILV, WVFY…FFFL, FFGN…LTYG, and IIVS…FEAS. N-linked (GlcNAc...) asparagine glycosylation is present at Asn317. The next 6 membrane-spanning stretches (helical) occupy residues 325–345, 357–377, 386–406, 410–430, 451–471, and 524–544; these read IATF…PLYF, GVML…GGAL, NIHF…TILN, SLAV…VPTA, TFAF…AAIF, and LERV…VIFL. The span at 564-585 shows a compositional bias: polar residues; the sequence is IPQTAADNSASRPNTINDTASQ. The interval 564 to 602 is disordered; the sequence is IPQTAADNSASRPNTINDTASQAPILKQRRSTNQERETV. N-linked (GlcNAc...) asparagine glycosylation occurs at Asn580.

The protein belongs to the major facilitator superfamily.

Its subcellular location is the cell membrane. In terms of biological role, MFS-type efflux transporter; part of the gene cluster that mediates the biosynthesis of the mycotoxin pyrichalasin H, a tyrosine-derived cytochalasan that inhibits the growth of rice seedlings, but also inhibits lymphocyte capping and actin polymerization and alters cell morphology. Pyrichalasin H is indicated as the responsible agent for the genus-specific pathogenicity of M.grisea toward crabgrass. PyiT might be involved in the excretion of pyrichalasin H. The sequence is that of MFS-type efflux transporter pyiT from Pyricularia grisea (Crabgrass-specific blast fungus).